A 132-amino-acid chain; its full sequence is Small ribosomal subunit protein uS12 (132 aa).

Asp-89 is modified (3-methylthioaspartic acid).

This sequence belongs to the universal ribosomal protein uS12 family. As to quaternary structure, part of the 30S ribosomal subunit. Contacts proteins S8 and S17. May interact with IF1 in the 30S initiation complex.

With S4 and S5 plays an important role in translational accuracy. In terms of biological role, interacts with and stabilizes bases of the 16S rRNA that are involved in tRNA selection in the A site and with the mRNA backbone. Located at the interface of the 30S and 50S subunits, it traverses the body of the 30S subunit contacting proteins on the other side and probably holding the rRNA structure together. The combined cluster of proteins S8, S12 and S17 appears to hold together the shoulder and platform of the 30S subunit. This chain is Small ribosomal subunit protein uS12, found in Campylobacter curvus (strain 525.92).